Consider the following 414-residue polypeptide: Putative dipeptidase ARB_02715 (414 aa).

The signal sequence occupies residues 1 to 20 (MAALFVSLLALTSLVPVQGA). Positions 45, 47, and 157 each coordinate Zn(2+). Cys96 and Cys186 are disulfide-bonded. His184 is a substrate binding site. Zn(2+) is bound by residues His228 and His249. Residues Arg260 and Asp320 each contribute to the substrate site. Asn392 carries an N-linked (GlcNAc...) asparagine glycan.

It belongs to the metallo-dependent hydrolases superfamily. Peptidase M19 family. Zn(2+) serves as cofactor.

It catalyses the reaction an L-aminoacyl-L-amino acid + H2O = 2 an L-alpha-amino acid. Hydrolyzes a wide range of dipeptides. In Arthroderma benhamiae (strain ATCC MYA-4681 / CBS 112371) (Trichophyton mentagrophytes), this protein is Putative dipeptidase ARB_02715.